The chain runs to 171 residues: 3-hydroxydecanoyl-[acyl-carrier-protein] dehydratase (171 aa).

The active site involves His-70.

The protein belongs to the thioester dehydratase family. FabA subfamily. As to quaternary structure, homodimer.

It localises to the cytoplasm. It catalyses the reaction a (3R)-hydroxyacyl-[ACP] = a (2E)-enoyl-[ACP] + H2O. The catalysed reaction is (3R)-hydroxydecanoyl-[ACP] = (2E)-decenoyl-[ACP] + H2O. The enzyme catalyses (2E)-decenoyl-[ACP] = (3Z)-decenoyl-[ACP]. Its pathway is lipid metabolism; fatty acid biosynthesis. Its function is as follows. Necessary for the introduction of cis unsaturation into fatty acids. Catalyzes the dehydration of (3R)-3-hydroxydecanoyl-ACP to E-(2)-decenoyl-ACP and then its isomerization to Z-(3)-decenoyl-ACP. Can catalyze the dehydratase reaction for beta-hydroxyacyl-ACPs with saturated chain lengths up to 16:0, being most active on intermediate chain length. This chain is 3-hydroxydecanoyl-[acyl-carrier-protein] dehydratase, found in Shewanella pealeana (strain ATCC 700345 / ANG-SQ1).